Consider the following 134-residue polypeptide: Large ribosomal subunit protein bL12 (134 aa).

The protein belongs to the bacterial ribosomal protein bL12 family. As to quaternary structure, homodimer. Part of the ribosomal stalk of the 50S ribosomal subunit. Forms a multimeric L10(L12)X complex, where L10 forms an elongated spine to which 2 to 4 L12 dimers bind in a sequential fashion. Binds GTP-bound translation factors.

Its function is as follows. Forms part of the ribosomal stalk which helps the ribosome interact with GTP-bound translation factors. Is thus essential for accurate translation. This chain is Large ribosomal subunit protein bL12, found in Anaplasma phagocytophilum (strain HZ).